The sequence spans 107 residues: Wound-induced proteinase inhibitor 1 (107 aa).

The signal sequence occupies residues 1 to 23 (MESKFAHIIVFFLLATSFETLLA). The propeptide occupies 24 to 36 (RKESDGPEVIELQ).

The protein belongs to the protease inhibitor I13 (potato type I serine protease inhibitor) family. Heterogeneous tetramers of similar chains.

Inhibits both chymotrypsin and trypsin. The polypeptide is Wound-induced proteinase inhibitor 1 (Solanum tuberosum (Potato)).